We begin with the raw amino-acid sequence, 513 residues long: Maturase K (513 aa).

It belongs to the intron maturase 2 family. MatK subfamily.

It localises to the plastid. It is found in the chloroplast. In terms of biological role, usually encoded in the trnK tRNA gene intron. Probably assists in splicing its own and other chloroplast group II introns. This chain is Maturase K, found in Byblis liniflora (Carnivorous plant).